The primary structure comprises 211 residues: Nucleoside triphosphate pyrophosphatase (211 aa).

The Proton acceptor role is filled by D75.

The protein belongs to the Maf family. Requires a divalent metal cation as cofactor.

It localises to the cytoplasm. The catalysed reaction is a ribonucleoside 5'-triphosphate + H2O = a ribonucleoside 5'-phosphate + diphosphate + H(+). It carries out the reaction a 2'-deoxyribonucleoside 5'-triphosphate + H2O = a 2'-deoxyribonucleoside 5'-phosphate + diphosphate + H(+). In terms of biological role, nucleoside triphosphate pyrophosphatase. May have a dual role in cell division arrest and in preventing the incorporation of modified nucleotides into cellular nucleic acids. In Prochlorococcus marinus (strain NATL1A), this protein is Nucleoside triphosphate pyrophosphatase.